We begin with the raw amino-acid sequence, 263 residues long: Ribosomal RNA small subunit methyltransferase A (263 aa).

Positions 13, 15, 40, 61, 85, and 105 each coordinate S-adenosyl-L-methionine.

Belongs to the class I-like SAM-binding methyltransferase superfamily. rRNA adenine N(6)-methyltransferase family. RsmA subfamily.

The protein resides in the cytoplasm. It carries out the reaction adenosine(1518)/adenosine(1519) in 16S rRNA + 4 S-adenosyl-L-methionine = N(6)-dimethyladenosine(1518)/N(6)-dimethyladenosine(1519) in 16S rRNA + 4 S-adenosyl-L-homocysteine + 4 H(+). Specifically dimethylates two adjacent adenosines (A1518 and A1519) in the loop of a conserved hairpin near the 3'-end of 16S rRNA in the 30S particle. May play a critical role in biogenesis of 30S subunits. This is Ribosomal RNA small subunit methyltransferase A from Mycoplasma pneumoniae (strain ATCC 29342 / M129 / Subtype 1) (Mycoplasmoides pneumoniae).